Here is a 651-residue protein sequence, read N- to C-terminus: p-hydroxybenzoic acid efflux pump subunit AaeB (651 aa).

Transmembrane regions (helical) follow at residues 11-31 (FAFK…HLQL), 41-61 (AAIV…SGAI), 67-87 (LRII…VLTI), 91-111 (VLTL…SSLV), 119-139 (FGLA…TPLL), 150-170 (EIVL…PRSI), 368-388 (LFWL…IAVV), 405-425 (FLVG…FIIP), 429-449 (QSML…GIEV), 455-475 (GSLG…PMIF), and 481-501 (LDSA…LLLI).

This sequence belongs to the aromatic acid exporter ArAE (TC 2.A.85) family.

The protein resides in the cell inner membrane. In terms of biological role, forms an efflux pump with AaeA. Could function as a metabolic relief valve, allowing to eliminate certain compounds when they accumulate to high levels in the cell. In Yersinia pseudotuberculosis serotype O:1b (strain IP 31758), this protein is p-hydroxybenzoic acid efflux pump subunit AaeB.